A 2377-amino-acid chain; its full sequence is DNA (cytosine-5-)-methyltransferase DMT5 (2377 aa).

A disordered region spans residues 24-56 (GTADGAVNGGNIPNSQSQKRKRASPSPEIESEE). Positions 62–126 (YEIDYIADSR…KNPGKPRLSP (65 aa)) constitute a Chromo; shadow subtype domain. The disordered stretch occupies residues 150-282 (GKSRAASSTD…KSSLPKAKLR (133 aa)). Over residues 201-213 (PTSKKVHPNKKCK) the composition is skewed to basic residues. Composition is skewed to acidic residues over residues 217 to 238 (DDES…DDND) and 245 to 263 (EDDE…ESDE). A compositionally biased stretch (basic residues) spans 268–282 (PAKKTKSSLPKAKLR). The region spanning 347–753 (LRVATMCSGT…IAALKVACHK (407 aa)) is the SAM-dependent MTase C5-type domain. Residue Cys440 is part of the active site. One can recognise a Helicase ATP-binding domain in the interval 1450 to 1771 (AERPVMVRGG…RSIATFMGIH (322 aa)). 1463 to 1470 (DQVGYGKT) is an ATP binding site. Disordered regions lie at residues 1642 to 1680 (KGQA…ENSK), 2313 to 2334 (KGRG…TVKS), and 2347 to 2377 (SSFR…SDII). Over residues 1645–1669 (AYRDKHDSDSKAKPITKEELERWEA) the composition is skewed to basic and acidic residues. The Helicase C-terminal domain maps to 2152–2315 (KLEHLVNLIH…EIPQEEYKGR (164 aa)). Over residues 2317–2334 (SSISMTNEKRTPTLTVKS) the composition is skewed to polar residues. The span at 2363–2377 (GVSDDDENSELSDII) shows a compositional bias: acidic residues.

In the N-terminal section; belongs to the class I-like SAM-binding methyltransferase superfamily. C5-methyltransferase family. This sequence in the C-terminal section; belongs to the SNF2/RAD54 helicase family. In terms of assembly, interacts with SWI6. Mg(2+) is required as a cofactor.

The protein resides in the nucleus. The protein localises to the chromosome. The catalysed reaction is a 2'-deoxycytidine in DNA + S-adenosyl-L-methionine + ATP + H2O = a 5-methyl-2'-deoxycytidine in DNA + S-adenosyl-L-homocysteine + ADP + phosphate + 2 H(+). Its activity is regulated as follows. Hemimethylated DNA substrates stimulate ATP hydrolysis and this is a prerequisite for methyltransferase activity. Functionally, ATP-dependent cytosine methylase that maintains DNA methylation by acting at hemimethylated palindromic 5'-CG-3' sites to produce symmetrically methylated DNA strands. DNA methylation may play a role in transcriptional silencing, particularly at transposable elements. The protein is DNA (cytosine-5-)-methyltransferase DMT5 of Cryptococcus neoformans var. grubii serotype A (strain H99 / ATCC 208821 / CBS 10515 / FGSC 9487) (Filobasidiella neoformans var. grubii).